The chain runs to 732 residues: Subtilisin-like protease SBT4.13 (732 aa).

Residues 1-24 form the signal peptide; the sequence is MATLAASSSLLSCLLVLFLSSVSA. Residues 25–109 constitute a propeptide, activation peptide; it reads VTDDKQVYIV…VFPNKKLQLQ (85 aa). Residues 31 to 108 enclose the Inhibitor I9 domain; it reads VYIVYMGSLS…SVFPNKKLQL (78 aa). The Peptidase S8 domain occupies 113–579; the sequence is SWDFMGLKEG…SGHVDPIAAS (467 aa). D141 acts as the Charge relay system in catalysis. N172 is a glycosylation site (N-linked (GlcNAc...) asparagine). H196 acts as the Charge relay system in catalysis. A glycan (N-linked (GlcNAc...) asparagine) is linked at N219. Residues 352 to 436 enclose the PA domain; the sequence is DYPLVYGKSA…GLLTEDFESL (85 aa). N-linked (GlcNAc...) asparagine glycosylation occurs at N458. S518 functions as the Charge relay system in the catalytic mechanism. N555, N600, N648, and N658 each carry an N-linked (GlcNAc...) asparagine glycan.

The protein belongs to the peptidase S8 family. The C-terminal propeptide is autocleaved.

The protein resides in the secreted. The sequence is that of Subtilisin-like protease SBT4.13 from Arabidopsis thaliana (Mouse-ear cress).